Here is a 492-residue protein sequence, read N- to C-terminus: Cobyric acid synthase (492 aa).

Residues 252–440 form the GATase cobBQ-type domain; that stretch reads RPKIAVLAYP…VHGLFADDHL (189 aa). Cysteine 334 functions as the Nucleophile in the catalytic mechanism. Histidine 432 is a catalytic residue.

The protein belongs to the CobB/CobQ family. CobQ subfamily.

It participates in cofactor biosynthesis; adenosylcobalamin biosynthesis. Its function is as follows. Catalyzes amidations at positions B, D, E, and G on adenosylcobyrinic A,C-diamide. NH(2) groups are provided by glutamine, and one molecule of ATP is hydrogenolyzed for each amidation. This Bradyrhizobium sp. (strain BTAi1 / ATCC BAA-1182) protein is Cobyric acid synthase.